The following is a 465-amino-acid chain: UDP-N-acetylmuramoylalanine--D-glutamate ligase (465 aa).

Residue 124-130 participates in ATP binding; it reads GSDGKTT.

It belongs to the MurCDEF family.

It is found in the cytoplasm. It carries out the reaction UDP-N-acetyl-alpha-D-muramoyl-L-alanine + D-glutamate + ATP = UDP-N-acetyl-alpha-D-muramoyl-L-alanyl-D-glutamate + ADP + phosphate + H(+). Its pathway is cell wall biogenesis; peptidoglycan biosynthesis. In terms of biological role, cell wall formation. Catalyzes the addition of glutamate to the nucleotide precursor UDP-N-acetylmuramoyl-L-alanine (UMA). The sequence is that of UDP-N-acetylmuramoylalanine--D-glutamate ligase from Ruminiclostridium cellulolyticum (strain ATCC 35319 / DSM 5812 / JCM 6584 / H10) (Clostridium cellulolyticum).